A 253-amino-acid polypeptide reads, in one-letter code: Protein C1orf43 (253 aa).

The helical transmembrane segment at 11–31 (VNVVLVMAYGSLVFVLLFIFV) threads the bilayer.

The protein resides in the membrane. It localises to the golgi apparatus. The protein localises to the mitochondrion. Functionally, general regulator of phagocytosis. Required to uptake Gram negative bacterium by macrophages. This Homo sapiens (Human) protein is Protein C1orf43 (C1orf43).